The primary structure comprises 360 residues: Peptide chain release factor 1 (360 aa).

Gln236 carries the post-translational modification N5-methylglutamine. The interval Gln288–Ile308 is disordered. Basic and acidic residues predominate over residues Ala293 to Ile308.

Belongs to the prokaryotic/mitochondrial release factor family. Methylated by PrmC. Methylation increases the termination efficiency of RF1.

It is found in the cytoplasm. Its function is as follows. Peptide chain release factor 1 directs the termination of translation in response to the peptide chain termination codons UAG and UAA. In Streptococcus equi subsp. zooepidemicus (strain H70), this protein is Peptide chain release factor 1.